The chain runs to 748 residues: Peroxisomal membrane protein PEX14 (748 aa).

2 disordered regions span residues 1–138 and 190–228; these read MDND…LSPS and GNIN…NNNN. At 1–277 the chain is on the peroxisomal side; it reads MDNDDINNNN…IAQLMMNNNR (277 aa). Low complexity predominate over residues 7-30; that stretch reads NNNNNNNNNNNNNNNSQELDQQEQ. Positions 8-60 form a coiled coil; sequence NNNNNNNNNNNNNNSQELDQQEQTQEEITKQRIQKRKEEAKRIMEERKKREQQ. The span at 43–59 shows a compositional bias: basic and acidic residues; sequence RKEEAKRIMEERKKREQ. The span at 86-104 shows a compositional bias: polar residues; it reads PQRQQQYDDNDEPPQQQQY. Low complexity-rich tracts occupy residues 122-131, 190-209, and 218-228; these read TTSSTASAAT, GNIN…NSIS, and NNNNNSSNNNN. The stretch at 241–277 forms a coiled coil; it reads QQHQQQQQMALTQIQSYQKRLEADDQRIAQLMMNNNR. A helical membrane pass occupies residues 278–300; that stretch reads FSWNSFLFSVTAIVGAASGLAYL. The Cytoplasmic portion of the chain corresponds to 301 to 748; the sequence is TSNYIIPFLN…INNTDSSVEK (448 aa). Residues 316-413 adopt a coiled-coil conformation; sequence KDASANMDKK…IGNKENSNNS (98 aa). 2 disordered regions span residues 406-673 and 685-748; these read NKEN…ETPY and KQGK…SVEK. Composition is skewed to low complexity over residues 409-424 and 445-476; these read NSNN…NNNN and STNN…PGSN. Residues 510–527 show a composition bias toward polar residues; that stretch reads SWQQKSSNPPSDLSNAND. Low complexity-rich tracts occupy residues 528-542 and 569-611; these read KSSP…PTKP and TTTT…NNNN. Polar residues predominate over residues 612-627; sequence TTIASTSNESNNSKVE. Over residues 628 to 661 the composition is skewed to low complexity; the sequence is TTSNDSDKSTSPSSSSNNTTSTTATTTTITSAST. Positions 710-723 are enriched in basic and acidic residues; the sequence is SAKERPKKPWERDT. Positions 724-748 are enriched in polar residues; the sequence is LTSVTNNLSVEETQTINNTDSSVEK.

The protein belongs to the peroxin-14 family. Interacts with PEX13; forming the PEX13-PEX14 docking complex. Interacts with PEX5 (via WxxxF/Y motifs).

The protein resides in the peroxisome membrane. Its function is as follows. Component of the PEX13-PEX14 docking complex, a translocon channel that specifically mediates the import of peroxisomal cargo proteins bound to PEX5 receptor. The PEX13-PEX14 docking complex forms a large import pore which can be opened to a diameter of about 9 nm. Mechanistically, PEX5 receptor along with cargo proteins associates with the PEX14 subunit of the PEX13-PEX14 docking complex in the cytosol, leading to the insertion of the receptor into the organelle membrane with the concomitant translocation of the cargo into the peroxisome matrix. This chain is Peroxisomal membrane protein PEX14 (pex14), found in Dictyostelium discoideum (Social amoeba).